The following is a 487-amino-acid chain: Betaine aldehyde dehydrogenase (487 aa).

Residues serine 26 and aspartate 93 each coordinate K(+). 150–152 (GAW) serves as a coordination point for NAD(+). Lysine 162 (charge relay system) is an active-site residue. Residues 176-179 (KPSE) and 229-232 (SVPT) contribute to the NAD(+) site. Residue leucine 244 coordinates K(+). Residue glutamate 250 is the Proton acceptor of the active site. NAD(+) contacts are provided by glycine 252, cysteine 284, and glutamate 384. The active-site Nucleophile is the cysteine 284. Cysteine sulfenic acid (-SOH) is present on cysteine 284. Residues lysine 454 and glycine 457 each contribute to the K(+) site. The Charge relay system role is filled by glutamate 461.

This sequence belongs to the aldehyde dehydrogenase family. Dimer of dimers. K(+) serves as cofactor.

The catalysed reaction is betaine aldehyde + NAD(+) + H2O = glycine betaine + NADH + 2 H(+). It functions in the pathway amine and polyamine biosynthesis; betaine biosynthesis via choline pathway; betaine from betaine aldehyde: step 1/1. Involved in the biosynthesis of the osmoprotectant glycine betaine. Catalyzes the irreversible oxidation of betaine aldehyde to the corresponding acid. This is Betaine aldehyde dehydrogenase from Rhizobium etli (strain CIAT 652).